We begin with the raw amino-acid sequence, 108 residues long: Cell wall protein PGA48 (108 aa).

A signal peptide spans 1 to 17 (MFKFVIYLFTFIAFANA). Residues asparagine 18, asparagine 41, and asparagine 77 are each glycosylated (N-linked (GlcNAc...) asparagine). Asparagine 84 is lipidated: GPI-anchor amidated asparagine. Positions 85-108 (GASKLNLRSLAGAGLVAAIFIAFI) are cleaved as a propeptide — removed in mature form.

Belongs to the SED1 family. The GPI-anchor is attached to the protein in the endoplasmic reticulum and serves to target the protein to the cell surface. There, the glucosamine-inositol phospholipid moiety is cleaved off and the GPI-modified mannoprotein is covalently attached via its lipidless GPI glycan remnant to the 1,6-beta-glucan of the outer cell wall layer.

Its subcellular location is the secreted. The protein resides in the cell wall. The protein localises to the membrane. In terms of biological role, cell wall protein that plays a role in adaptation and resistance to cell wall stress. The chain is Cell wall protein PGA48 (PGA48) from Candida albicans (strain SC5314 / ATCC MYA-2876) (Yeast).